We begin with the raw amino-acid sequence, 131 residues long: Large ribosomal subunit protein eL32 (131 aa).

The protein belongs to the eukaryotic ribosomal protein eL32 family. As to quaternary structure, component of the large ribosomal subunit (LSU). Mature N.crassa ribosomes consist of a small (40S) and a large (60S) subunit. The 40S small subunit contains 1 molecule of ribosomal RNA (18S rRNA) and at least 32 different proteins. The large 60S subunit contains 3 rRNA molecules (26S, 5.8S and 5S rRNA) and at least 42 different proteins.

The protein localises to the cytoplasm. In terms of biological role, component of the ribosome, a large ribonucleoprotein complex responsible for the synthesis of proteins in the cell. The small ribosomal subunit (SSU) binds messenger RNAs (mRNAs) and translates the encoded message by selecting cognate aminoacyl-transfer RNA (tRNA) molecules. The large subunit (LSU) contains the ribosomal catalytic site termed the peptidyl transferase center (PTC), which catalyzes the formation of peptide bonds, thereby polymerizing the amino acids delivered by tRNAs into a polypeptide chain. The nascent polypeptides leave the ribosome through a tunnel in the LSU and interact with protein factors that function in enzymatic processing, targeting, and the membrane insertion of nascent chains at the exit of the ribosomal tunnel. The protein is Large ribosomal subunit protein eL32 (crp-63) of Neurospora crassa (strain ATCC 24698 / 74-OR23-1A / CBS 708.71 / DSM 1257 / FGSC 987).